Consider the following 406-residue polypeptide: Probable peptidoglycan glycosyltransferase FtsW (406 aa).

The next 9 membrane-spanning stretches (helical) occupy residues 22–42 (LWFVMSLIAILALGIVMVASA), 56–76 (FFMGRQILYLILGVSFGFMML), 86–106 (WGILLMLLSLVLLVLVLVPGI), 116–136 (WINLIVFNLQASEVAKVCMVV), 153–173 (LIGFALPLFLTSLFLIFLLME), 186–206 (VIALLFIGGAPVYQFIAIVIM), 280–300 (IWVEEMGLLGGVVLLSLFALM), 318–338 (FAGYMCFGFAILILAQVIINV), and 352–372 (LPLISYGGSSLIITLGSLFVV). Basic and acidic residues predominate over residues 383 to 397 (SKGGESEERKRKSDE). The interval 383-406 (SKGGESEERKRKSDESIDDGEALA) is disordered.

Belongs to the SEDS family. FtsW subfamily.

The protein localises to the cell inner membrane. It catalyses the reaction [GlcNAc-(1-&gt;4)-Mur2Ac(oyl-L-Ala-gamma-D-Glu-L-Lys-D-Ala-D-Ala)](n)-di-trans,octa-cis-undecaprenyl diphosphate + beta-D-GlcNAc-(1-&gt;4)-Mur2Ac(oyl-L-Ala-gamma-D-Glu-L-Lys-D-Ala-D-Ala)-di-trans,octa-cis-undecaprenyl diphosphate = [GlcNAc-(1-&gt;4)-Mur2Ac(oyl-L-Ala-gamma-D-Glu-L-Lys-D-Ala-D-Ala)](n+1)-di-trans,octa-cis-undecaprenyl diphosphate + di-trans,octa-cis-undecaprenyl diphosphate + H(+). It participates in cell wall biogenesis; peptidoglycan biosynthesis. Functionally, peptidoglycan polymerase that is essential for cell division. This Marinomonas mediterranea (strain ATCC 700492 / JCM 21426 / NBRC 103028 / MMB-1) protein is Probable peptidoglycan glycosyltransferase FtsW.